Reading from the N-terminus, the 293-residue chain is MYVADVPARLLAVHAHPDDESLTMAGTLAGAALAGAEVTLVTATLGEEGEVIGDELQGLIAARADQLGGYRLTELAAAGAALGVRERVMLGGLGAFRDSGMAGTPSAEHPRAFIRAQRGGPDHDRAARALAREIDRVRPHVLLTYDEDGGYGHPDHVAVHQVVLAALPLAAWPVPRVLAVIRPRTVTQADFAALTTPPGYLAAAADEVGFLAADDSVAVAVPVTAAAARRRAALAAHATQVELLPGEVFALSNRIAQPLPAAEYFRVLAGSPVPVGPDWTVPADVAAGLDLDR.

H16, D19, and H156 together coordinate Zn(2+).

The protein belongs to the MshB deacetylase family. Zn(2+) serves as cofactor.

It catalyses the reaction 1D-myo-inositol 2-acetamido-2-deoxy-alpha-D-glucopyranoside + H2O = 1D-myo-inositol 2-amino-2-deoxy-alpha-D-glucopyranoside + acetate. Its function is as follows. Catalyzes the deacetylation of 1D-myo-inositol 2-acetamido-2-deoxy-alpha-D-glucopyranoside (GlcNAc-Ins) in the mycothiol biosynthesis pathway. This Nakamurella multipartita (strain ATCC 700099 / DSM 44233 / CIP 104796 / JCM 9543 / NBRC 105858 / Y-104) (Microsphaera multipartita) protein is 1D-myo-inositol 2-acetamido-2-deoxy-alpha-D-glucopyranoside deacetylase.